A 33-amino-acid chain; its full sequence is ATP synthase 27 kDa subunit, mitochondrial (33 aa).

It is found in the mitochondrion. The protein localises to the mitochondrion inner membrane. Its function is as follows. Mitochondrial membrane ATP synthase (F(1)F(0) ATP synthase or Complex V) produces ATP from ADP in the presence of a proton gradient across the membrane which is generated by electron transport complexes of the respiratory chain. F-type ATPases consist of two structural domains, F(1) - containing the extramembraneous catalytic core and F(0) - containing the membrane proton channel, linked together by a central stalk and a peripheral stalk. During catalysis, ATP synthesis in the catalytic domain of F(1) is coupled via a rotary mechanism of the central stalk subunits to proton translocation. Part of the complex F(0) domain. In Solanum tuberosum (Potato), this protein is ATP synthase 27 kDa subunit, mitochondrial.